The primary structure comprises 346 residues: Quinolinate synthase (346 aa).

Positions 47 and 68 each coordinate iminosuccinate. C113 lines the [4Fe-4S] cluster pocket. Iminosuccinate-binding positions include 139 to 141 (YAN) and S156. C200 is a binding site for [4Fe-4S] cluster. Iminosuccinate contacts are provided by residues 226 to 228 (HPE) and T243. C297 is a [4Fe-4S] cluster binding site.

This sequence belongs to the quinolinate synthase family. Type 1 subfamily. [4Fe-4S] cluster is required as a cofactor.

Its subcellular location is the cytoplasm. The enzyme catalyses iminosuccinate + dihydroxyacetone phosphate = quinolinate + phosphate + 2 H2O + H(+). The protein operates within cofactor biosynthesis; NAD(+) biosynthesis; quinolinate from iminoaspartate: step 1/1. In terms of biological role, catalyzes the condensation of iminoaspartate with dihydroxyacetone phosphate to form quinolinate. This chain is Quinolinate synthase, found in Photorhabdus laumondii subsp. laumondii (strain DSM 15139 / CIP 105565 / TT01) (Photorhabdus luminescens subsp. laumondii).